The primary structure comprises 827 residues: SID1 transmembrane family member 1 (827 aa).

Residues 1-19 (MRGCLRLALLCALPWLLLA) form the signal peptide. Over 20-309 (ASPGHPAKSP…SIKESVYVKS (290 aa)) the chain is Extracellular. 5 N-linked (GlcNAc...) asparagine glycosylation sites follow: Asn57, Asn67, Asn83, Asn136, and Asn282. A helical membrane pass occupies residues 310–330 (SLFSVFIFLSFYLGCLLVGFV). Residues 331–442 (HYLRFQRKSI…DRRIVSKKYK (112 aa)) lie on the Cytoplasmic side of the membrane. The tract at residues 355–408 (ASHPIAASTPEGSNYGTIDESSSSPGRQMSSSDGGPPGQSDTDSSVEESDFDTM) is disordered. A compositionally biased stretch (polar residues) spans 364-374 (PEGSNYGTIDE). Residues 375–397 (SSSSPGRQMSSSDGGPPGQSDTD) are compositionally biased toward low complexity. Residues 398 to 408 (SSVEESDFDTM) show a composition bias toward acidic residues. The chain crosses the membrane as a helical span at residues 443-463 (IYFWNIITIAVFYALPVIQLV). At 464-494 (ITYQTVVNVTGNQDICYYNFLCAHPLGVLSA) the chain is on the extracellular side. The N-linked (GlcNAc...) asparagine glycan is linked to Asn471. The chain crosses the membrane as a helical span at residues 495 to 515 (FNNILSNLGHVLLGFLFLLIV). Residues 516-541 (LRRDILHRRALEAKDIFAVEYGIPKH) lie on the Cytoplasmic side of the membrane. A helical membrane pass occupies residues 542 to 562 (FGLFYAMGIALMMEGVLSACY). Residues 563-572 (HVCPNYSNFQ) are Extracellular-facing. N-linked (GlcNAc...) asparagine glycosylation is present at Asn567. Residues 573–590 (FDTSFMYMIAGLCMLKLY) traverse the membrane as a helical segment. The Cytoplasmic segment spans residues 591–600 (QTRHPDINAS). The helical transmembrane segment at 601 to 621 (AYSAYASFAVVIMVTVLGVVF) threads the bilayer. Residues 622 to 626 (GKNDV) lie on the Extracellular side of the membrane. A helical transmembrane segment spans residues 627–647 (WFWVIFSAIHVLASLALSTQI). The Cytoplasmic segment spans residues 648–683 (YYMGRFKIDLGIFRRAAMVFYTDCIQQCSRPLYMDR). Residues 684-704 (MVLLVVGNLVNWSFALFGLIY) form a helical membrane-spanning segment. Residues 705 to 710 (RPRDFA) lie on the Extracellular side of the membrane. The helical transmembrane segment at 711-731 (SYMLGIFICNLLLYLAFYIIM) threads the bilayer. Topologically, residues 732–741 (KLRSSEKVLP) are cytoplasmic. Residues 742–762 (VPLFCIVATAVMWAAALYFFF) form a helical membrane-spanning segment. Over 763–791 (QNLSSWEGTPAESREKNRECILLDFFDDH) the chain is Extracellular. An N-linked (GlcNAc...) asparagine glycan is attached at Asn764. The helical transmembrane segment at 792 to 812 (DIWHFLSATALFFSFLVLLTL) threads the bilayer. The Cytoplasmic portion of the chain corresponds to 813–827 (DDDLDVVRRDQIPVF).

The protein belongs to the SID1 family.

Its subcellular location is the membrane. In terms of biological role, in vitro binds long double-stranded RNA (dsRNA) (500 and 700 base pairs), but not dsRNA shorter than 300 bp. Not involved in RNA autophagy, a process in which RNA is directly imported into lysosomes in an ATP-dependent manner, and degraded. The polypeptide is SID1 transmembrane family member 1 (SIDT1) (Homo sapiens (Human)).